The following is a 150-amino-acid chain: Single-stranded DNA-binding protein rim1, mitochondrial (150 aa).

Residues methionine 1 to tyrosine 22 constitute a mitochondrion transit peptide. One can recognise an SSB domain in the interval isoleucine 25–proline 125. The interval asparagine 127–phenylalanine 150 is disordered. The span at lysine 128–leucine 141 shows a compositional bias: basic and acidic residues.

Its subcellular location is the mitochondrion. In terms of biological role, this protein binds preferentially and cooperatively to ss-DNA. Involved in mitochondrial DNA replication. The polypeptide is Single-stranded DNA-binding protein rim1, mitochondrial (rim1) (Schizosaccharomyces pombe (strain 972 / ATCC 24843) (Fission yeast)).